We begin with the raw amino-acid sequence, 333 residues long: 2-haloacrylate reductase (333 aa).

153 to 159 (AAAGGMG) contributes to the NADP(+) binding site.

It belongs to the zinc-containing alcohol dehydrogenase family.

It catalyses the reaction (S)-2-chloropropanoate + NADP(+) = 2-chloroacrylate + NADPH + H(+). In terms of biological role, involved in the degradation of unsaturated organohalogen compounds. Catalyzes the NADPH-dependent reduction of the carbon-carbon double bond of 2-chloroacrylate to produce (S)-2-chloropropionate, which is probably further metabolized to (R)-lactate by (S)-2-haloacid dehalogenase. Can also use 2-bromoacrylate as substrate. Does not act on acrylate, methacrylate, 1,4-benzoquinone and 1,4-naphthoquinone. This chain is 2-haloacrylate reductase, found in Burkholderia sp.